Reading from the N-terminus, the 479-residue chain is Cardiolipin synthase A (479 aa).

Transmembrane regions (helical) follow at residues 8–28 (FFGYVLGFIHLLGTGAAIHAL) and 38–58 (IAWAMPLLFIPYFTLLPYLVF). 2 consecutive PLD phosphodiesterase domains span residues 218-245 (INFRNHRKIVVVDGLKGYIGGHNVGDEY) and 392-419 (EPGFLHQKVVLVDNEITAIGSANLDNRS). Residues His223, Lys225, Asp230, His397, Lys399, and Asp404 contribute to the active site.

Belongs to the phospholipase D family. Cardiolipin synthase subfamily. ClsA sub-subfamily.

Its subcellular location is the cell inner membrane. The catalysed reaction is 2 a 1,2-diacyl-sn-glycero-3-phospho-(1'-sn-glycerol) = a cardiolipin + glycerol. Its function is as follows. Catalyzes the reversible phosphatidyl group transfer from one phosphatidylglycerol molecule to another to form cardiolipin (CL) (diphosphatidylglycerol) and glycerol. This Pseudomonas syringae pv. syringae (strain B728a) protein is Cardiolipin synthase A.